We begin with the raw amino-acid sequence, 298 residues long: Glutamyl-Q tRNA(Asp) synthetase (298 aa).

Residues 9–13 (RFAPS) and E45 each bind L-glutamate. The 'HIGH' region signature appears at 12 to 22 (PSPSGELHFGS). Residues C101, C103, Y115, and C119 each coordinate Zn(2+). Residues Y172 and R190 each contribute to the L-glutamate site. Residues 228–232 (KLSKQ) carry the 'KMSKS' region motif. K231 lines the ATP pocket.

The protein belongs to the class-I aminoacyl-tRNA synthetase family. GluQ subfamily. It depends on Zn(2+) as a cofactor.

Catalyzes the tRNA-independent activation of glutamate in presence of ATP and the subsequent transfer of glutamate onto a tRNA(Asp). Glutamate is transferred on the 2-amino-5-(4,5-dihydroxy-2-cyclopenten-1-yl) moiety of the queuosine in the wobble position of the QUC anticodon. This is Glutamyl-Q tRNA(Asp) synthetase from Salmonella typhi.